Consider the following 318-residue polypeptide: MASGNCTTPTTFILSGLTDNPGLQMPLFMVFLAIYTITLLTNLGLIALISVDLHLQTPMYIFLQNLSFTDAAYSTVITPKMLATFLEERKTISYVGCILQYFSFVLLTVTESLLLAVMAYDRYVAICKPLLYPSIMTKAVCWRLVESLYFLAFLNSLVHTSGLLKLSFCYSNVVNHFFCDISPLFQISSSSIAISELLVIISGSLFVMSSIIIILISYVFIILTVVMIRSKDGKYKAFSTCTSHLMAVSLFHGTVIFMYLRPVKLFSLDTDKIASLFYTVVIPMLNPLIYSWRNKEVKDALRRLTATTFGFIDSKAVQ.

Residues 1–26 (MASGNCTTPTTFILSGLTDNPGLQMP) lie on the Extracellular side of the membrane. An N-linked (GlcNAc...) asparagine glycan is attached at Asn-5. Residues 27 to 49 (LFMVFLAIYTITLLTNLGLIALI) traverse the membrane as a helical segment. The Cytoplasmic portion of the chain corresponds to 50–57 (SVDLHLQT). Residues 58–79 (PMYIFLQNLSFTDAAYSTVITP) form a helical membrane-spanning segment. The Extracellular portion of the chain corresponds to 80–100 (KMLATFLEERKTISYVGCILQ). An intrachain disulfide couples Cys-97 to Cys-179. The chain crosses the membrane as a helical span at residues 101–120 (YFSFVLLTVTESLLLAVMAY). Topologically, residues 121–139 (DRYVAICKPLLYPSIMTKA) are cytoplasmic. Residues 140-164 (VCWRLVESLYFLAFLNSLVHTSGLL) traverse the membrane as a helical segment. At 165–205 (KLSFCYSNVVNHFFCDISPLFQISSSSIAISELLVIISGSL) the chain is on the extracellular side. The helical transmembrane segment at 206–226 (FVMSSIIIILISYVFIILTVV) threads the bilayer. The Cytoplasmic segment spans residues 227–239 (MIRSKDGKYKAFS). Residues 240–260 (TCTSHLMAVSLFHGTVIFMYL) traverse the membrane as a helical segment. Topologically, residues 261 to 271 (RPVKLFSLDTD) are extracellular. The chain crosses the membrane as a helical span at residues 272–292 (KIASLFYTVVIPMLNPLIYSW). At 293–318 (RNKEVKDALRRLTATTFGFIDSKAVQ) the chain is on the cytoplasmic side.

It belongs to the G-protein coupled receptor 1 family.

The protein resides in the cell membrane. Its function is as follows. Odorant receptor. This Gallus gallus (Chicken) protein is Olfactory receptor-like protein COR1 (COR1).